Reading from the N-terminus, the 120-residue chain is Small cysteine and glycine repeat-containing protein 2 (120 aa).

Residues 4–104 form a 19 X 2 AA repeats of CG region; it reads CGCGGCGGCG…TCHSCGCGCG (101 aa).

The protein belongs to the KRTAP type 28 family.

In the hair cortex, hair keratin intermediate filaments are embedded in an interfilamentous matrix, consisting of hair keratin-associated proteins (KRTAP), which are essential for the formation of a rigid and resistant hair shaft through their extensive disulfide bond cross-linking with abundant cysteine residues of hair keratins. The matrix proteins include the high-sulfur and high-glycine-tyrosine keratins. This chain is Small cysteine and glycine repeat-containing protein 2, found in Homo sapiens (Human).